A 275-amino-acid chain; its full sequence is Myoblast determination protein 1 homolog 2 (275 aa).

The region spanning 84-135 (DRRKAATMRERRRLGKVNDAFENLKRCTSNNPNQRLPKVEILRNAISYIESL) is the bHLH domain. Residues 232 to 265 (SGQEGSEGSPCSPQEGSILSRNGGTVPSPTNCPQ) are compositionally biased toward polar residues. The segment at 232-275 (SGQEGSEGSPCSPQEGSILSRNGGTVPSPTNCPQPSHDPIYQVL) is disordered.

In terms of assembly, efficient DNA binding requires dimerization with another bHLH protein.

Its subcellular location is the nucleus. Its function is as follows. May act as a transcriptional activator that promotes transcription of muscle-specific target genes and plays a role in muscle differentiation. The polypeptide is Myoblast determination protein 1 homolog 2 (myod2) (Oncorhynchus mykiss (Rainbow trout)).